Consider the following 65-residue polypeptide: Precursor peptide TigB (65 aa).

6 TIGSVS motif repeats span residues 16–21, 23–28, 33–38, 40–45, 47–52, and 54–59; these read TIGSVS. Residues I17, I24, I34, I41, I48, and I55 each carry the methylcyclopropylglycine modification.

Post-translationally, is subject to maturation by TigE, that catalyzes the formation of methylcyclopropylglycine (mCPG) residues from isoleucine residues residing in the repeating TIGSVS motifs.

Its function is as follows. Precursor peptide which undergoes post-translational modifications by tailoring enzymes, leading to the mature natural product. In Paramaledivibacter caminithermalis (strain DSM 15212 / CIP 107654 / DViRD3) (Clostridium caminithermale), this protein is Precursor peptide TigB.